Here is a 77-residue protein sequence, read N- to C-terminus: Sec-independent protein translocase protein TatA (77 aa).

Residues 1 to 21 form a helical membrane-spanning segment; that stretch reads MGSFSIWHWLIVLVIVMLVFG. The segment at 40–77 is disordered; it reads KDGMKEGNTDEPATPTPAKELRDSTTIDVEAKEKSRQQ. Positions 58 to 77 are enriched in basic and acidic residues; sequence KELRDSTTIDVEAKEKSRQQ.

The protein belongs to the TatA/E family. In terms of assembly, the Tat system comprises two distinct complexes: a TatABC complex, containing multiple copies of TatA, TatB and TatC subunits, and a separate TatA complex, containing only TatA subunits. Substrates initially bind to the TatABC complex, which probably triggers association of the separate TatA complex to form the active translocon.

It is found in the cell inner membrane. Functionally, part of the twin-arginine translocation (Tat) system that transports large folded proteins containing a characteristic twin-arginine motif in their signal peptide across membranes. TatA could form the protein-conducting channel of the Tat system. The polypeptide is Sec-independent protein translocase protein TatA (Cupriavidus metallidurans (strain ATCC 43123 / DSM 2839 / NBRC 102507 / CH34) (Ralstonia metallidurans)).